The sequence spans 769 residues: Signal transducer and activator of transcription 3.1 (769 aa).

Residues 150–162 carry the Essential for nuclear import motif; that stretch reads DVRKKVQDLEQKM. Residues 580-670 form the SH2 domain; that stretch reads WNEGYIMGFI…DATNILVSPL (91 aa). Ser-728 carries the post-translational modification Phosphoserine; by NLK.

Belongs to the transcription factor STAT family. Forms a homodimer or a heterodimer with a related family member, such as stat1. Interacts with nlk.2. Phosphorylation of both tyrosine and serine residues, together with dimerization, is required for mesoderm induction.

Its subcellular location is the cytoplasm. The protein localises to the nucleus. Its function is as follows. Transcription factor that binds to target promoter sequences and activates transcription upon il6st/gp130 stimulation. Mediates ventralization of embryos, at least in part via inhibition of smad2 signaling. Required for hairy2 to induce dll1/delta1 and promote neural crest cell proliferation and differentiation. Involved in TGFbeta-mediated mesoderm induction in early embryos, acting downstream of map3k7/tak1 and nlk.2. The polypeptide is Signal transducer and activator of transcription 3.1 (stat3.1) (Xenopus laevis (African clawed frog)).